A 556-amino-acid polypeptide reads, in one-letter code: MDGALINSVLYVSPRNGAHYFVELTEKHLLAFEMLNSMCLLENYDHVLLFLECQFGKSHNLAVIPFDIILVLFTLSTLSEYYKEPILRANDPYNTSRETLSRRALKLLQKYLAILKEFDSEQYNLYDLELLRCQFFLAIDTLTPKKQKWGFDRFRRTKSESGVTYRQNASVDPELDQAKTFKNPYRSYISCLEQRNTILGNRLLNLKLNEPGEFINMILWTLSNSLQESTPLFLSSHEIWMPLLEILIDLFSCRQDYFIQHEVAQNVSKSLFVQRLSESPLAVFFESLNTRNFANRFSEYVFLNCDYKLPSDNYATPVHPVYNGENTIVDTYIPTIKCSPLYKSQKSLALRRKLIGSCFKLLLRVPDGHRLITPRIVADDVIQGISRTLASFNDILQFKKFFMTENLSQESYFIPLLAEGTLSEILKDTQECVVILTLVENLSDGVSFCNEVIGLVKSKCFAFTEQCSQASYEEAVLNIEKCDVCLLVLLRYLLHLIGTEAILDAKEQLEMLHAIEKNDSGRRQWAKALNLGNDPPLLYPIVSQMFGVHDKSVIIE.

Component of the Smc5-Smc6 complex which consists of KRE29, MMS21, NSE1, NSE3, NSE4, NSE5, SMC5 and SMC6. Interacts with KRE29.

It localises to the nucleus. The protein resides in the chromosome. Functionally, acts in a DNA repair pathway for removal of UV-induced DNA damage that is distinct from classical nucleotide excision repair and in repair of ionizing radiation damage. Functions in homologous recombination repair of DNA double strand breaks and in recovery of stalled replication forks. This is Non-structural maintenance of chromosome element 5 (NSE5) from Saccharomyces cerevisiae (strain ATCC 204508 / S288c) (Baker's yeast).